We begin with the raw amino-acid sequence, 307 residues long: D-alanine--D-alanine ligase (307 aa).

Residues 101-301 (KTVMRAAGVS…FGELVRWMVE (201 aa)) enclose the ATP-grasp domain. Residue 127 to 182 (PLTPPYVVKPIAEGSSMGVIIVRDERSHPPQILASDEWVYGEEVLAETYVAGRELT) participates in ATP binding. Positions 251, 268, and 270 each coordinate Mg(2+).

This sequence belongs to the D-alanine--D-alanine ligase family. Mg(2+) is required as a cofactor. The cofactor is Mn(2+).

It is found in the cytoplasm. It carries out the reaction 2 D-alanine + ATP = D-alanyl-D-alanine + ADP + phosphate + H(+). It participates in cell wall biogenesis; peptidoglycan biosynthesis. Functionally, cell wall formation. The polypeptide is D-alanine--D-alanine ligase (Methylorubrum extorquens (strain CM4 / NCIMB 13688) (Methylobacterium extorquens)).